We begin with the raw amino-acid sequence, 66 residues long: Large ribosomal subunit protein bL35c (66 aa).

Belongs to the bacterial ribosomal protein bL35 family.

The protein localises to the plastid. The protein resides in the chloroplast. The sequence is that of Large ribosomal subunit protein bL35c from Gracilaria tenuistipitata var. liui (Red alga).